We begin with the raw amino-acid sequence, 245 residues long: Ribonuclease PH (245 aa).

Residues Arg86 and 124–126 each bind phosphate; that span reads GTR.

Belongs to the RNase PH family. As to quaternary structure, homohexameric ring arranged as a trimer of dimers.

The enzyme catalyses tRNA(n+1) + phosphate = tRNA(n) + a ribonucleoside 5'-diphosphate. Functionally, phosphorolytic 3'-5' exoribonuclease that plays an important role in tRNA 3'-end maturation. Removes nucleotide residues following the 3'-CCA terminus of tRNAs; can also add nucleotides to the ends of RNA molecules by using nucleoside diphosphates as substrates, but this may not be physiologically important. Probably plays a role in initiation of 16S rRNA degradation (leading to ribosome degradation) during starvation. The sequence is that of Ribonuclease PH from Bacillus cereus (strain B4264).